Consider the following 103-residue polypeptide: NADH-quinone oxidoreductase subunit K (103 aa).

The next 3 helical transmembrane spans lie at 7-27, 31-51, and 65-85; these read TEHGLYLAAALFILGLIGVLV, LIFMLLSLEIMLNATGLAFIV, and FMLILTLAAAEAAVALALILL.

Belongs to the complex I subunit 4L family. NDH-1 is composed of 14 different subunits. Subunits NuoA, H, J, K, L, M, N constitute the membrane sector of the complex.

Its subcellular location is the cell inner membrane. The catalysed reaction is a quinone + NADH + 5 H(+)(in) = a quinol + NAD(+) + 4 H(+)(out). Functionally, NDH-1 shuttles electrons from NADH, via FMN and iron-sulfur (Fe-S) centers, to quinones in the respiratory chain. The immediate electron acceptor for the enzyme in this species is believed to be ubiquinone. Couples the redox reaction to proton translocation (for every two electrons transferred, four hydrogen ions are translocated across the cytoplasmic membrane), and thus conserves the redox energy in a proton gradient. This chain is NADH-quinone oxidoreductase subunit K, found in Nitrosococcus oceani (strain ATCC 19707 / BCRC 17464 / JCM 30415 / NCIMB 11848 / C-107).